The following is a 383-amino-acid chain: Mannan endo-1,4-beta-mannosidase (383 aa).

A signal peptide spans 1–35; sequence MRNARSTLITTAGMAFAVLGLLFALAGPSAGRAEA. The CBM10 domain maps to 339–377; that stretch reads GGSTGGTAPNGYPYCVNGGASDPDGDGWGWENSRSCVVR.

It belongs to the glycosyl hydrolase 5 (cellulase A) family. In terms of assembly, monomer.

The enzyme catalyses Random hydrolysis of (1-&gt;4)-beta-D-mannosidic linkages in mannans, galactomannans and glucomannans.. The chain is Mannan endo-1,4-beta-mannosidase (manA) from Streptomyces lividans.